Reading from the N-terminus, the 4423-residue chain is Nonribosomal peptide synthetase 7 (4423 aa).

Residues 572-986 (NIYPCTSIQE…LISQDDKNRI (415 aa)) are condensation 1. Residues 1007-1404 (ERIQKQPSAV…GRRDTQVKIR (398 aa)) are adenylation 1. In terms of domain architecture, Carrier 1 spans 1533-1609 (LPLTETEQKL…DLARTIDERN (77 aa)). The residue at position 1570 (S1570) is an O-(pantetheine 4'-phosphoryl)serine. The tract at residues 1657–2066 (EDVYPCTSLQ…QFLDETHHET (410 aa)) is condensation 2. An adenylation 2 region spans residues 2102-2499 (RDVAKEQPDS…YIGRMGSEVK (398 aa)). Residues 2642 to 2718 (VPQTRIGKKL…DCARILEADQ (77 aa)) enclose the Carrier 2 domain. At S2679 the chain carries O-(pantetheine 4'-phosphoryl)serine. Positions 2764 to 3170 (EDVYPCTPMQ…AASASSDDQT (407 aa)) are condensation 3. The interval 3205–3609 (RSLETRPDSQ…GRGDSQIKIR (405 aa)) is adenylation 3. One can recognise a Carrier 3 domain in the interval 3731-3804 (TESEYITRTL…KMAVVAQHQT (74 aa)). An O-(pantetheine 4'-phosphoryl)serine modification is found at S3765. A condensation 4 region spans residues 3875 to 4278 (TFVLDAEGDL…SQDEKLALLG (404 aa)). Polar residues predominate over residues 4288 to 4300 (KLTKLQRVNSPKE). The disordered stretch occupies residues 4288-4312 (KLTKLQRVNSPKEQTLRKDKPTNGV).

This sequence belongs to the NRP synthetase family.

Its pathway is secondary metabolite biosynthesis. Its function is as follows. Nonribosomal peptide synthetase; part of the gene cluster that mediates the biosynthesis of the lipopeptide fusaristatin A. Fusaristatin A consists of a polyketide chain linked to three amino acid residues glutamine (Gln), dehydroalanine (dehydro-Ala), and beta-aminoisobutyric acid. The biosynthesis starts with formation of a linear polyketide chain by the highly reducing polyketide synthase PKS6. The gene cluster does not contain an acyl-CoA ligase or an acyl-transferase, and it is therefore predicted that the polyketide is transferred directly to the nonribosomal peptide synthetase NRPS7. Modules 1-3 from NRPS7 incorporate dehydro-Ala, Gln, and beta-aminoisobutyric acid in the compound, which is released by cyclization. The beta-aminoisobutyric acid units are most likely not freely available to the NRPS, but can be synthesized from thymine, which requires a dehydrogenase, a monooxygenase, and an aminotransferase. The fusaristatin A cluster contains a cytochrome P450 monooxygenase (FGSG_08207) and an aminotransferase (FGSG_17085), which theoretically can perform two of the enzymatic steps. The enzymes may however also be involved in biosynthesis of dehydroalanine or modification of the polyketide. The dehydro-Ala residue can be a result of cyclization, where serine is dehydrated. The last gene of the cluster encodes a protein with an A/B barrel domain found in variable enzymes, which hampers functional prediction. The polypeptide is Nonribosomal peptide synthetase 7 (Gibberella zeae (strain ATCC MYA-4620 / CBS 123657 / FGSC 9075 / NRRL 31084 / PH-1) (Wheat head blight fungus)).